A 293-amino-acid chain; its full sequence is Ribosomal protein L11 methyltransferase (293 aa).

S-adenosyl-L-methionine-binding residues include threonine 144, glycine 165, aspartate 187, and asparagine 228.

This sequence belongs to the methyltransferase superfamily. PrmA family.

It is found in the cytoplasm. It catalyses the reaction L-lysyl-[protein] + 3 S-adenosyl-L-methionine = N(6),N(6),N(6)-trimethyl-L-lysyl-[protein] + 3 S-adenosyl-L-homocysteine + 3 H(+). Functionally, methylates ribosomal protein L11. The chain is Ribosomal protein L11 methyltransferase from Methylococcus capsulatus (strain ATCC 33009 / NCIMB 11132 / Bath).